We begin with the raw amino-acid sequence, 53 residues long: Snake venom serine protease LmrSP-4 (53 aa).

Cysteine 26 and cysteine 42 are joined by a disulfide. The Charge relay system role is filled by histidine 41.

As to quaternary structure, monomer. In terms of processing, N-glycosylated. Expressed by the venom gland.

The protein resides in the secreted. Its activity is regulated as follows. Inhibited by the small molecule serine protease inhibitors phenylmethylsulfonyl fluoride (PMSF) and benzamidine. Its function is as follows. Snake venom serine protease that has fibrinogenolytic activity. Hydrolyzes the alpha-chain of fibrinogen (FGA), without affecting the beta- and the gamma-chains. Also displays hydrolytic activity towards S-2302 (plasma kallikrein substrate) and S-2251 (substrate for plasmin), but has no hydrolytic activity with S-2238 (thrombin substrate) or S-2222 (factor Xa). This is Snake venom serine protease LmrSP-4 from Lachesis muta rhombeata (Bushmaster).